Reading from the N-terminus, the 181-residue chain is Shikimate kinase (181 aa).

Residue Gly-17–Thr-22 coordinates ATP. Thr-21 contributes to the Mg(2+) binding site. Positions 39, 63, and 85 each coordinate substrate. Arg-122 contributes to the ATP binding site. Arg-141 is a substrate binding site.

Belongs to the shikimate kinase family. As to quaternary structure, monomer. It depends on Mg(2+) as a cofactor.

The protein localises to the cytoplasm. It catalyses the reaction shikimate + ATP = 3-phosphoshikimate + ADP + H(+). Its pathway is metabolic intermediate biosynthesis; chorismate biosynthesis; chorismate from D-erythrose 4-phosphate and phosphoenolpyruvate: step 5/7. Its function is as follows. Catalyzes the specific phosphorylation of the 3-hydroxyl group of shikimic acid using ATP as a cosubstrate. This chain is Shikimate kinase, found in Nostoc punctiforme (strain ATCC 29133 / PCC 73102).